The following is a 567-amino-acid chain: Proline--tRNA ligase (567 aa).

The protein belongs to the class-II aminoacyl-tRNA synthetase family. ProS type 1 subfamily. In terms of assembly, homodimer.

Its subcellular location is the cytoplasm. It carries out the reaction tRNA(Pro) + L-proline + ATP = L-prolyl-tRNA(Pro) + AMP + diphosphate. Functionally, catalyzes the attachment of proline to tRNA(Pro) in a two-step reaction: proline is first activated by ATP to form Pro-AMP and then transferred to the acceptor end of tRNA(Pro). As ProRS can inadvertently accommodate and process non-cognate amino acids such as alanine and cysteine, to avoid such errors it has two additional distinct editing activities against alanine. One activity is designated as 'pretransfer' editing and involves the tRNA(Pro)-independent hydrolysis of activated Ala-AMP. The other activity is designated 'posttransfer' editing and involves deacylation of mischarged Ala-tRNA(Pro). The misacylated Cys-tRNA(Pro) is not edited by ProRS. The polypeptide is Proline--tRNA ligase (Staphylococcus aureus (strain MRSA252)).